The chain runs to 776 residues: 5-methyltetrahydropteroyltriglutamate--homocysteine methyltransferase (776 aa).

5-methyltetrahydropteroyltri-L-glutamate is bound by residues 13–16 (RELK) and lysine 127. L-homocysteine-binding positions include 450–452 (IGS) and glutamate 503. L-methionine-binding positions include 450–452 (IGS) and glutamate 503. Tryptophan 580 contributes to the 5-methyltetrahydropteroyltri-L-glutamate binding site. Aspartate 618 contacts L-homocysteine. An L-methionine-binding site is contributed by aspartate 618. A 5-methyltetrahydropteroyltri-L-glutamate-binding site is contributed by glutamate 624. 3 residues coordinate Zn(2+): histidine 660, cysteine 662, and glutamate 684. Residue histidine 713 is the Proton donor of the active site. Cysteine 745 provides a ligand contact to Zn(2+).

Belongs to the vitamin-B12 independent methionine synthase family. Zn(2+) serves as cofactor.

The catalysed reaction is 5-methyltetrahydropteroyltri-L-glutamate + L-homocysteine = tetrahydropteroyltri-L-glutamate + L-methionine. It participates in amino-acid biosynthesis; L-methionine biosynthesis via de novo pathway; L-methionine from L-homocysteine (MetE route): step 1/1. Functionally, catalyzes the transfer of a methyl group from 5-methyltetrahydrofolate to homocysteine resulting in methionine formation. This Mesorhizobium japonicum (strain LMG 29417 / CECT 9101 / MAFF 303099) (Mesorhizobium loti (strain MAFF 303099)) protein is 5-methyltetrahydropteroyltriglutamate--homocysteine methyltransferase.